The sequence spans 403 residues: Ribosomal RNA large subunit methyltransferase I (403 aa).

The 80-residue stretch at 9 to 88 (YPRLVLSKGR…ESIDIAFFTR (80 aa)) folds into the PUA domain.

Belongs to the methyltransferase superfamily. RlmI family.

Its subcellular location is the cytoplasm. It catalyses the reaction cytidine(1962) in 23S rRNA + S-adenosyl-L-methionine = 5-methylcytidine(1962) in 23S rRNA + S-adenosyl-L-homocysteine + H(+). Functionally, specifically methylates the cytosine at position 1962 (m5C1962) of 23S rRNA. This Salmonella typhi protein is Ribosomal RNA large subunit methyltransferase I.